The primary structure comprises 570 residues: Frizzled-2 (570 aa).

Positions 1–28 (MRARSALPRSALPRLLLPLLLLPAAGPA) are cleaved as a signal peptide. Over 29–252 (QFHGEKGISI…QEETRFARLW (224 aa)) the chain is Extracellular. The 120-residue stretch at 39-158 (PDHGFCQPIS…HGAEQICVGQ (120 aa)) folds into the FZ domain. Cystine bridges form between cysteine 44–cysteine 105, cysteine 52–cysteine 98, cysteine 89–cysteine 126, cysteine 115–cysteine 155, and cysteine 119–cysteine 143. Asparagine 58 carries N-linked (GlcNAc...) asparagine glycosylation. N-linked (GlcNAc...) asparagine glycosylation is present at asparagine 159. The interval 166 to 194 (PALLTTAPPSGLQPGAGGTPGGPGGGGSP) is disordered. A compositionally biased stretch (gly residues) spans 179-193 (PGAGGTPGGPGGGGS). The chain crosses the membrane as a helical span at residues 253-273 (ILTWSVLCCASTFFTVTTYLV). Residues 274-284 (DMQRFRYPERP) are Cytoplasmic-facing. A helical transmembrane segment spans residues 285-305 (IIFLSGCYTMVSVAYIAGFVL). Topologically, residues 306–332 (QERVVCNERFSEDGYRTVVQGTKKEGC) are extracellular. Residues 333–353 (TILFMMLYFFSMASSIWWVIL) form a helical membrane-spanning segment. Topologically, residues 354-375 (SLTWFLAAGMKWGHEAIEANSQ) are cytoplasmic. A helical transmembrane segment spans residues 376-396 (YFHLAAWAVPAVKTITILAMG). The Extracellular segment spans residues 397–419 (QIDGDLLSGVCFVGLNSLDPLRG). A helical membrane pass occupies residues 420-440 (FVLAPLFVYLFIGTSFLLAGF). Residues 441–466 (VSLFRIRTIMKHDGTKTEKLERLMVR) lie on the Cytoplasmic side of the membrane. The chain crosses the membrane as a helical span at residues 467–487 (IGVFSVLYTVPATIVIACYFY). The Extracellular portion of the chain corresponds to 488 to 524 (EQAFREHWERSWVSQHCKSLAIPCPAHYTPRMSPDFT). The helical transmembrane segment at 525–545 (VYMIKYLMTLIVGITSGFWIW) threads the bilayer. Residues 546–570 (SGKTLHSWRKFYTRLTNSRHGETTV) are Cytoplasmic-facing. A Lys-Thr-X-X-X-Trp motif, mediates interaction with the PDZ domain of Dvl family members motif is present at residues 548 to 553 (KTLHSW). A PDZ-binding motif is present at residues 568 to 570 (TTV).

The protein belongs to the G-protein coupled receptor Fz/Smo family. Post-translationally, ubiquitinated by ZNRF3, leading to its degradation by the proteasome. As to expression, expressed in embryonic and adult heart, lung, chondrocytes and brain. Also expressed in the developing gastrointestinal tract (strongest in foregut), much weaker expression in the adult. No expression in fetal liver and adult spleen. Up-regulated in esophageal squamous cell carcinomas.

It localises to the membrane. It is found in the cell membrane. Functionally, receptor for Wnt proteins. Most of frizzled receptors are coupled to the beta-catenin canonical signaling pathway, which leads to the activation of disheveled proteins, inhibition of GSK-3 kinase, nuclear accumulation of beta-catenin and activation of Wnt target genes. A second signaling pathway involving PKC and calcium fluxes has been seen for some family members, but it is not yet clear if it represents a distinct pathway or if it can be integrated in the canonical pathway, as PKC seems to be required for Wnt-mediated inactivation of GSK-3 kinase. Both pathways seem to involve interactions with G-proteins. May be involved in transduction and intercellular transmission of polarity information during tissue morphogenesis and/or in differentiated tissues. The sequence is that of Frizzled-2 (Fzd2) from Mus musculus (Mouse).